The chain runs to 444 residues: Vacuolar protein sorting-associated protein 4 (444 aa).

In terms of domain architecture, MIT spans 2–80 (GDVNFLQKAI…KEYLDKSKNK (79 aa)). The interval 79-122 (NKKPVAVGGNKSNSAGSANGAGKSAKEDDEDMDPEDKKRNDSLS) is disordered. The segment covering 86–101 (GGNKSNSAGSANGAGK) has biased composition (low complexity). 175–182 (GPPGTGKS) serves as a coordination point for ATP.

It belongs to the AAA ATPase family.

Its subcellular location is the prevacuolar compartment membrane. It localises to the endosome membrane. The enzyme catalyses ATP + H2O = ADP + phosphate + H(+). Its function is as follows. Involved in intracellular protein transport probably out of a prevacuolar endosomal compartment. May be involved in the release of components of the bilayered coat from the endosomal membrane. The association with ESCRT-III complex mediates the ATP-dependent disassembly of the ESCRT-III complex. In Dictyostelium discoideum (Social amoeba), this protein is Vacuolar protein sorting-associated protein 4 (vps4).